We begin with the raw amino-acid sequence, 490 residues long: Alpha-galactosidase (490 aa).

4–70 (FKIAIIGAGS…LPTRVTATTD (67 aa)) contacts NAD(+). Asn-150 contacts substrate. Cys-171 contacts Mn(2+). His-172 serves as the catalytic Proton donor. His-201 serves as a coordination point for Mn(2+). Residue Tyr-258 is the Proton acceptor of the active site.

The protein belongs to the glycosyl hydrolase 4 family. Homodimer. Requires Mn(2+) as cofactor. NAD(+) serves as cofactor.

It catalyses the reaction Hydrolysis of terminal, non-reducing alpha-D-galactose residues in alpha-D-galactosides, including galactose oligosaccharides, galactomannans and galactolipids.. The polypeptide is Alpha-galactosidase (melA) (Rhizobium meliloti (strain 1021) (Ensifer meliloti)).